The chain runs to 158 residues: Methylated-DNA--protein-cysteine methyltransferase (158 aa).

The active-site Nucleophile; methyl group acceptor is the Cys-126.

This sequence belongs to the MGMT family.

It localises to the cytoplasm. The catalysed reaction is a 6-O-methyl-2'-deoxyguanosine in DNA + L-cysteinyl-[protein] = S-methyl-L-cysteinyl-[protein] + a 2'-deoxyguanosine in DNA. The enzyme catalyses a 4-O-methyl-thymidine in DNA + L-cysteinyl-[protein] = a thymidine in DNA + S-methyl-L-cysteinyl-[protein]. Its function is as follows. Involved in the cellular defense against the biological effects of O6-methylguanine (O6-MeG) and O4-methylthymine (O4-MeT) in DNA. Repairs the methylated nucleobase in DNA by stoichiometrically transferring the methyl group to a cysteine residue in the enzyme. This is a suicide reaction: the enzyme is irreversibly inactivated. This chain is Methylated-DNA--protein-cysteine methyltransferase, found in Methanosarcina barkeri (strain Fusaro / DSM 804).